The chain runs to 260 residues: Protein phosphatase 1 regulatory subunit 35 (260 aa).

The disordered stretch occupies residues 1–100 (MMGFGASALE…PLLVAGAPGD (100 aa)). S46 and S53 each carry phosphoserine. The segment covering 64 to 76 (RKGRRGGSRRGRQ) has biased composition (basic residues).

This sequence belongs to the PPP1R35 family. Interacts with PPP1CA; this interaction mediates the PPP1CA phosphatase activity inhibition. Interacts with RTTN; this interaction allows the mutual recruitment to the centriole.

The protein localises to the cytoplasm. The protein resides in the cytoskeleton. Its subcellular location is the microtubule organizing center. It localises to the centrosome. It is found in the centriole. Its function is as follows. During centriole duplication, plays a role in the centriole elongation by promoting the recruitment of the microtubule-binding elongation machinery through its interaction with TTTN, leading to the centriole to centrosome conversion. In addition may play a role in the primary cilia assembly. The protein is Protein phosphatase 1 regulatory subunit 35 of Mus musculus (Mouse).